Consider the following 334-residue polypeptide: Ribosomal RNA small subunit methyltransferase H (334 aa).

Positions Met1–Thr21 are disordered. Residues Gly52–Tyr54, Asp71, Phe98, Asp119, and Gln126 contribute to the S-adenosyl-L-methionine site.

This sequence belongs to the methyltransferase superfamily. RsmH family.

The protein resides in the cytoplasm. The catalysed reaction is cytidine(1402) in 16S rRNA + S-adenosyl-L-methionine = N(4)-methylcytidine(1402) in 16S rRNA + S-adenosyl-L-homocysteine + H(+). In terms of biological role, specifically methylates the N4 position of cytidine in position 1402 (C1402) of 16S rRNA. This chain is Ribosomal RNA small subunit methyltransferase H, found in Granulibacter bethesdensis (strain ATCC BAA-1260 / CGDNIH1).